Here is a 228-residue protein sequence, read N- to C-terminus: tRNA (guanine-N(1)-)-methyltransferase (228 aa).

Residues G111 and I130 to L135 contribute to the S-adenosyl-L-methionine site.

The protein belongs to the RNA methyltransferase TrmD family. Homodimer.

The protein resides in the cytoplasm. The enzyme catalyses guanosine(37) in tRNA + S-adenosyl-L-methionine = N(1)-methylguanosine(37) in tRNA + S-adenosyl-L-homocysteine + H(+). Specifically methylates guanosine-37 in various tRNAs. The protein is tRNA (guanine-N(1)-)-methyltransferase of Ureaplasma parvum serovar 3 (strain ATCC 27815 / 27 / NCTC 11736).